Here is a 372-residue protein sequence, read N- to C-terminus: Putative glutamate--cysteine ligase 2 (372 aa).

It belongs to the glutamate--cysteine ligase type 2 family. YbdK subfamily. As to quaternary structure, homodimer.

The catalysed reaction is L-cysteine + L-glutamate + ATP = gamma-L-glutamyl-L-cysteine + ADP + phosphate + H(+). In terms of biological role, ATP-dependent carboxylate-amine ligase which exhibits weak glutamate--cysteine ligase activity. The protein is Putative glutamate--cysteine ligase 2 (ybdK) of Escherichia coli O81 (strain ED1a).